We begin with the raw amino-acid sequence, 190 residues long: Peptidyl-tRNA hydrolase (190 aa).

Tyrosine 14 serves as a coordination point for tRNA. Histidine 19 acts as the Proton acceptor in catalysis. 3 residues coordinate tRNA: tyrosine 64, asparagine 66, and asparagine 112.

The protein belongs to the PTH family. In terms of assembly, monomer.

The protein resides in the cytoplasm. The enzyme catalyses an N-acyl-L-alpha-aminoacyl-tRNA + H2O = an N-acyl-L-amino acid + a tRNA + H(+). Hydrolyzes ribosome-free peptidyl-tRNAs (with 1 or more amino acids incorporated), which drop off the ribosome during protein synthesis, or as a result of ribosome stalling. Its function is as follows. Catalyzes the release of premature peptidyl moieties from peptidyl-tRNA molecules trapped in stalled 50S ribosomal subunits, and thus maintains levels of free tRNAs and 50S ribosomes. The protein is Peptidyl-tRNA hydrolase of Pelodictyon phaeoclathratiforme (strain DSM 5477 / BU-1).